The following is a 159-amino-acid chain: Cyclic pyranopterin monophosphate synthase (159 aa).

Residues 75–77 and 113–114 each bind substrate; these read LCH and ME. Residue Asp128 is part of the active site.

It belongs to the MoaC family. As to quaternary structure, homohexamer; trimer of dimers.

The catalysed reaction is (8S)-3',8-cyclo-7,8-dihydroguanosine 5'-triphosphate = cyclic pyranopterin phosphate + diphosphate. It participates in cofactor biosynthesis; molybdopterin biosynthesis. Catalyzes the conversion of (8S)-3',8-cyclo-7,8-dihydroguanosine 5'-triphosphate to cyclic pyranopterin monophosphate (cPMP). This chain is Cyclic pyranopterin monophosphate synthase, found in Cereibacter sphaeroides (strain ATCC 17023 / DSM 158 / JCM 6121 / CCUG 31486 / LMG 2827 / NBRC 12203 / NCIMB 8253 / ATH 2.4.1.) (Rhodobacter sphaeroides).